We begin with the raw amino-acid sequence, 323 residues long: Olfactory receptor 51S1 (323 aa).

At 1–33 (MSTLPTQIAPNSSTSMAPTFLLVGMPGLSGAPS) the chain is on the extracellular side. An N-linked (GlcNAc...) asparagine glycan is attached at Asn11. A helical transmembrane segment spans residues 34–54 (WWTLPLIAVYLLSALGNGTIL). Residues 55–62 (WIIALQPA) lie on the Cytoplasmic side of the membrane. Residues 63–83 (LHRPMHFFLFLLSVSDIGLVT) traverse the membrane as a helical segment. At 84 to 107 (ALMPTLLGIALAGAHTVPASACLL) the chain is on the extracellular side. A disulfide bond links Cys105 and Cys197. A helical transmembrane segment spans residues 108–128 (QMVFIHVFSVMESSVLLAMSI). Residues 129-147 (DRALAICRPLHYPALLTNG) lie on the Cytoplasmic side of the membrane. Residues 148–168 (VISKISLAISFRCLGLHLPLP) traverse the membrane as a helical segment. The Extracellular portion of the chain corresponds to 169–203 (FLLAYMPYCLPQVLTHSYCLHPDVARLACPEAWGA). A helical transmembrane segment spans residues 204–224 (AYSLFVVLSAMGLDPLLIFFS). Over 225–244 (YGLIGKVLQGVESREDRWKA) the chain is Cytoplasmic. Residues 245–265 (GQTCAAHLSAVLLFYIPMILL) form a helical membrane-spanning segment. Topologically, residues 266 to 280 (ALINHPELPITQHTH) are extracellular. A helical transmembrane segment spans residues 281–301 (TLLSYVHFLLPPLINPILYSV). Residues 302–323 (KMKEIRKRILNRLQPRKVGGAQ) lie on the Cytoplasmic side of the membrane.

The protein belongs to the G-protein coupled receptor 1 family.

Its subcellular location is the cell membrane. Functionally, odorant receptor. This is Olfactory receptor 51S1 (OR51S1) from Homo sapiens (Human).